Consider the following 941-residue polypeptide: Protocadherin alpha-12 (941 aa).

A signal peptide spans 1-29 (MVIIGPRGPGSQRLLLSLLLLAAWEVGSG). 6 consecutive Cadherin domains span residues 30–133 (QLHY…PPVF), 134–242 (RERE…GPAF), 243–350 (DKPS…VPEV), 351–455 (MVTS…APAF), 456–565 (AQPE…APAL), and 581–678 (VPRS…APKT). Residues 30–697 (QLHYSVYEEA…DPEAALVDIN (668 aa)) lie on the Extracellular side of the membrane. N-linked (GlcNAc...) asparagine glycosylation is found at Asn-257 and Asn-265. An N-linked (GlcNAc...) asparagine glycan is attached at Asn-548. A helical membrane pass occupies residues 698-718 (VYLIIAICAVSSLLVLTLLLY). Over 719–941 (TALRCSAPPT…GNSTTDNSDQ (223 aa)) the chain is Cytoplasmic. PXXP repeat units follow at residues 734 to 737 (PGKP), 790 to 793 (PRQP), 823 to 826 (PGGP), 863 to 866 (GPGN), and 882 to 885 (PGSP). The interval 734–885 (PGKPTLVCSS…PDKFIIPGSP (152 aa)) is 5 X 4 AA repeats of P-X-X-P. The disordered stretch occupies residues 818–941 (ILRAGPGGPD…GNSTTDNSDQ (124 aa)). Basic and acidic residues predominate over residues 900 to 914 (DKSDFITFGKKEETK).

The protein localises to the cell membrane. In terms of biological role, potential calcium-dependent cell-adhesion protein. May be involved in the establishment and maintenance of specific neuronal connections in the brain. The sequence is that of Protocadherin alpha-12 (PCDHA12) from Pan troglodytes (Chimpanzee).